The following is a 194-amino-acid chain: Putative adenylate kinase (194 aa).

ATP contacts are provided by Gly-16, Gly-18, Lys-19, Thr-20, and Thr-21. The interval 36–59 (SVGELLAGTPYVTYIPELDTYEIV) is NMP. The interval 108–118 (RRGWPLKKILD) is LID. Arg-109 serves as a coordination point for ATP.

Belongs to the adenylate kinase family. AK6 subfamily. Interacts with uS11. Not a structural component of 40S pre-ribosomes, but transiently interacts with them by binding to uS11.

It catalyses the reaction AMP + ATP = 2 ADP. The enzyme catalyses ATP + H2O = ADP + phosphate + H(+). Broad-specificity nucleoside monophosphate (NMP) kinase that catalyzes the reversible transfer of the terminal phosphate group between nucleoside triphosphates and monophosphates. Also has ATPase activity. Involved in the late maturation steps of the 30S ribosomal particles, specifically 16S rRNA maturation. While NMP activity is not required for ribosome maturation, ATPase activity is. Associates transiently with small ribosomal subunit protein uS11. ATP hydrolysis breaks the interaction with uS11. May temporarily remove uS11 from the ribosome to enable a conformational change of the ribosomal RNA that is needed for the final maturation step of the small ribosomal subunit. This Pyrobaculum aerophilum (strain ATCC 51768 / DSM 7523 / JCM 9630 / CIP 104966 / NBRC 100827 / IM2) protein is Putative adenylate kinase.